We begin with the raw amino-acid sequence, 300 residues long: Virginiamycin B lyase (300 aa).

His-231 contributes to the substrate binding site. Glu-270 contributes to the Mg(2+) binding site. Residue His-272 is the Proton acceptor of the active site. Glu-287 lines the Mg(2+) pocket.

It belongs to the Vgb family. As to quaternary structure, monomer. Mg(2+) serves as cofactor.

Its function is as follows. Inactivates the type B streptogramin antibiotics by linearizing the lactone ring at the ester linkage, generating a free phenylglycine carboxylate and converting the threonyl moiety into 2-amino-butenoic acid. In Saccharopolyspora erythraea (strain ATCC 11635 / DSM 40517 / JCM 4748 / NBRC 13426 / NCIMB 8594 / NRRL 2338), this protein is Virginiamycin B lyase.